The following is a 95-amino-acid chain: Co-chaperonin GroES (95 aa).

The protein belongs to the GroES chaperonin family. As to quaternary structure, heptamer of 7 subunits arranged in a ring. Interacts with the chaperonin GroEL.

The protein localises to the cytoplasm. Functionally, together with the chaperonin GroEL, plays an essential role in assisting protein folding. The GroEL-GroES system forms a nano-cage that allows encapsulation of the non-native substrate proteins and provides a physical environment optimized to promote and accelerate protein folding. GroES binds to the apical surface of the GroEL ring, thereby capping the opening of the GroEL channel. The polypeptide is Co-chaperonin GroES (Rhodobacter capsulatus (Rhodopseudomonas capsulata)).